Reading from the N-terminus, the 290-residue chain is Glycine--tRNA ligase alpha subunit (290 aa).

The protein belongs to the class-II aminoacyl-tRNA synthetase family. As to quaternary structure, tetramer of two alpha and two beta subunits.

It localises to the cytoplasm. It catalyses the reaction tRNA(Gly) + glycine + ATP = glycyl-tRNA(Gly) + AMP + diphosphate. This chain is Glycine--tRNA ligase alpha subunit, found in Nitratiruptor sp. (strain SB155-2).